Consider the following 437-residue polypeptide: Phosphomethylpyrimidine synthase (437 aa).

Substrate-binding positions include Asn69, Met98, Tyr127, His163, 185 to 187 (SRG), 226 to 229 (DACR), and Glu265. His269 is a Zn(2+) binding site. A substrate-binding site is contributed by Tyr292. Zn(2+) is bound at residue His333. 3 residues coordinate [4Fe-4S] cluster: Cys409, Cys412, and Cys416.

The protein belongs to the ThiC family. The cofactor is [4Fe-4S] cluster.

It catalyses the reaction 5-amino-1-(5-phospho-beta-D-ribosyl)imidazole + S-adenosyl-L-methionine = 4-amino-2-methyl-5-(phosphooxymethyl)pyrimidine + CO + 5'-deoxyadenosine + formate + L-methionine + 3 H(+). The protein operates within cofactor biosynthesis; thiamine diphosphate biosynthesis. Its function is as follows. Catalyzes the synthesis of the hydroxymethylpyrimidine phosphate (HMP-P) moiety of thiamine from aminoimidazole ribotide (AIR) in a radical S-adenosyl-L-methionine (SAM)-dependent reaction. The protein is Phosphomethylpyrimidine synthase of Clostridium novyi (strain NT).